A 313-amino-acid chain; its full sequence is Ribosomal protein L11 methyltransferase (313 aa).

The S-adenosyl-L-methionine site is built by Thr-161, Gly-182, Asp-204, and Asn-247.

This sequence belongs to the methyltransferase superfamily. PrmA family.

Its subcellular location is the cytoplasm. The catalysed reaction is L-lysyl-[protein] + 3 S-adenosyl-L-methionine = N(6),N(6),N(6)-trimethyl-L-lysyl-[protein] + 3 S-adenosyl-L-homocysteine + 3 H(+). Its function is as follows. Methylates ribosomal protein L11. The protein is Ribosomal protein L11 methyltransferase of Alkaliphilus oremlandii (strain OhILAs) (Clostridium oremlandii (strain OhILAs)).